Consider the following 108-residue polypeptide: MLVLKTFSLFILTALAEILGCYLPYLWLKKDGSVWLLLPAAISLAVFAWLLSLHPTAAGRVYAAYGGVYIFVALGWLWLVDGIRPSTWDFVGVGVALAGMAIIMFAPR.

A run of 4 helical transmembrane segments spans residues 7–27 (FSLF…PYLW), 33–53 (SVWL…LLSL), 63–83 (AAYG…VDGI), and 87–107 (TWDF…MFAP).

The protein belongs to the UPF0060 family.

It localises to the cell inner membrane. In Methylobacillus flagellatus (strain ATCC 51484 / DSM 6875 / VKM B-1610 / KT), this protein is UPF0060 membrane protein Mfla_0485.